Reading from the N-terminus, the 876-residue chain is DNA mismatch repair protein MutS (876 aa).

626–633 (GPNMGGKS) serves as a coordination point for ATP.

The protein belongs to the DNA mismatch repair MutS family.

Its function is as follows. This protein is involved in the repair of mismatches in DNA. It is possible that it carries out the mismatch recognition step. This protein has a weak ATPase activity. This Bordetella bronchiseptica (strain ATCC BAA-588 / NCTC 13252 / RB50) (Alcaligenes bronchisepticus) protein is DNA mismatch repair protein MutS.